The primary structure comprises 80 residues: Small ribosomal subunit protein uS17c (80 aa).

The protein belongs to the universal ribosomal protein uS17 family. Part of the 30S ribosomal subunit.

The protein localises to the plastid. Its subcellular location is the chloroplast. In terms of biological role, one of the primary rRNA binding proteins, it binds specifically to the 5'-end of 16S ribosomal RNA. In Gracilaria tenuistipitata var. liui (Red alga), this protein is Small ribosomal subunit protein uS17c (rps17).